The primary structure comprises 668 residues: UvrABC system protein B (668 aa).

One can recognise a Helicase ATP-binding domain in the interval 31–188 (HGIEAGEKAQ…RKLVNIQFER (158 aa)). 44-51 (GATGTGKT) provides a ligand contact to ATP. The Beta-hairpin signature appears at 97–120 (YYDYYQPEAYVPSSDTYIEKDSSI). One can recognise a Helicase C-terminal domain in the interval 435-601 (QMDDLVGEIN…TIIKPIRDLI (167 aa)). Residues 630-665 (EKLIARLEDEMRAAAKKLDFEQAASLRDTIMDMKTE) enclose the UVR domain.

The protein belongs to the UvrB family. As to quaternary structure, forms a heterotetramer with UvrA during the search for lesions. Interacts with UvrC in an incision complex.

Its subcellular location is the cytoplasm. The UvrABC repair system catalyzes the recognition and processing of DNA lesions. A damage recognition complex composed of 2 UvrA and 2 UvrB subunits scans DNA for abnormalities. Upon binding of the UvrA(2)B(2) complex to a putative damaged site, the DNA wraps around one UvrB monomer. DNA wrap is dependent on ATP binding by UvrB and probably causes local melting of the DNA helix, facilitating insertion of UvrB beta-hairpin between the DNA strands. Then UvrB probes one DNA strand for the presence of a lesion. If a lesion is found the UvrA subunits dissociate and the UvrB-DNA preincision complex is formed. This complex is subsequently bound by UvrC and the second UvrB is released. If no lesion is found, the DNA wraps around the other UvrB subunit that will check the other stand for damage. This Levilactobacillus brevis (strain ATCC 367 / BCRC 12310 / CIP 105137 / JCM 1170 / LMG 11437 / NCIMB 947 / NCTC 947) (Lactobacillus brevis) protein is UvrABC system protein B.